The chain runs to 131 residues: UPF0102 protein YraN (131 aa).

Residues 1–19 (MATVPTRSGSPRQLTTKQT) show a composition bias toward polar residues. The tract at residues 1–20 (MATVPTRSGSPRQLTTKQTG) is disordered.

Belongs to the UPF0102 family.

This chain is UPF0102 protein YraN, found in Escherichia coli O157:H7.